The chain runs to 573 residues: 60 kDa heat shock protein, mitochondrial (573 aa).

Residues 1 to 26 (MLRLPAVLRQIRPVSRALAPHLTRAY) constitute a mitochondrion transit peptide. ATP-binding positions include Lys75 and 111-115 (DGTTT). Residue Tyr227 is modified to Phosphotyrosine. Residues Gly440 and Asp520 each contribute to the ATP site.

Its subcellular location is the mitochondrion matrix. The catalysed reaction is ATP + H2O + a folded polypeptide = ADP + phosphate + an unfolded polypeptide.. In terms of biological role, chaperonin implicated in mitochondrial protein import and macromolecular assembly. Together with Hsp10, facilitates the correct folding of imported proteins. May also prevent misfolding and promote the refolding and proper assembly of unfolded polypeptides generated under stress conditions in the mitochondrial matrix. The functional units of these chaperonins consist of heptameric rings of the large subunit Hsp60, which function as a back-to-back double ring. In a cyclic reaction, Hsp60 ring complexes bind one unfolded substrate protein per ring, followed by the binding of ATP and association with 2 heptameric rings of the co-chaperonin Hsp10. This leads to sequestration of the substrate protein in the inner cavity of Hsp60 where, for a certain period of time, it can fold undisturbed by other cell components. Synchronous hydrolysis of ATP in all Hsp60 subunits results in the dissociation of the chaperonin rings and the release of ADP and the folded substrate protein. This chain is 60 kDa heat shock protein, mitochondrial, found in Gallus gallus (Chicken).